We begin with the raw amino-acid sequence, 205 residues long: TATA-box-binding protein (205 aa).

2 consecutive repeat copies span residues 27–103 and 117–194.

This sequence belongs to the TBP family. In terms of assembly, belongs to the TFIID complex together with the TBP-associated factors (TAFs). Binds DNA as monomer.

The protein resides in the nucleus. Its function is as follows. General transcription factor that functions at the core of the DNA-binding multiprotein factor TFIID. Binding of TFIID to the TATA box is the initial transcriptional step of the pre-initiation complex (PIC), playing a role in the activation of eukaryotic genes transcribed by RNA polymerase II. The polypeptide is TATA-box-binding protein (tbpA) (Dictyostelium discoideum (Social amoeba)).